The sequence spans 416 residues: Diaminobutyrate--2-oxoglutarate transaminase (416 aa).

At Lys263 the chain carries N6-(pyridoxal phosphate)lysine.

The protein belongs to the class-III pyridoxal-phosphate-dependent aminotransferase family. The cofactor is pyridoxal 5'-phosphate.

It carries out the reaction L-2,4-diaminobutanoate + 2-oxoglutarate = L-aspartate 4-semialdehyde + L-glutamate. It functions in the pathway amine and polyamine biosynthesis; ectoine biosynthesis; L-ectoine from L-aspartate 4-semialdehyde: step 1/3. In terms of biological role, catalyzes reversively the conversion of L-aspartate beta-semialdehyde (ASA) to L-2,4-diaminobutyrate (DABA) by transamination with L-glutamate. This Virgibacillus pantothenticus protein is Diaminobutyrate--2-oxoglutarate transaminase (ectB).